The sequence spans 299 residues: Single myb histone 1 (299 aa).

An HTH myb-type domain is found at 1–61 (MGAPKQRWTP…KWRNLSVTAG (61 aa)). The segment at residues 28–57 (WRTILRDSDFSALLRLRSNVDLKDKWRNLS) is a DNA-binding region (H-T-H motif). Positions 124–192 (SVARLDDLIL…KVNQKYRIAP (69 aa)) constitute an H15 domain. Positions 238 to 279 (EEAAAFAAKAVAEAEVAIAEAEEAARVAEAAENDAEAAKAFL) form a coiled coil.

The protein belongs to the histone H1/H5 family. SMH subfamily. Forms a homodimer and heterodimers. Expressed in leaves.

The protein localises to the nucleus. It is found in the chromosome. The protein resides in the nucleolus. Its subcellular location is the telomere. Its function is as follows. Binds preferentially double-stranded telomeric repeats 5'-TTTAGGG-3', but can also bind to the single G-rich and C-rich telomeric strand. The polypeptide is Single myb histone 1 (SMH1) (Zea mays (Maize)).